A 292-amino-acid chain; its full sequence is NAD kinase (292 aa).

D73 functions as the Proton acceptor in the catalytic mechanism. NAD(+)-binding positions include 73 to 74 (DG), 147 to 148 (NE), H158, R175, D177, 188 to 193 (TAYSLS), and Q247.

Belongs to the NAD kinase family. A divalent metal cation serves as cofactor.

It localises to the cytoplasm. It catalyses the reaction NAD(+) + ATP = ADP + NADP(+) + H(+). In terms of biological role, involved in the regulation of the intracellular balance of NAD and NADP, and is a key enzyme in the biosynthesis of NADP. Catalyzes specifically the phosphorylation on 2'-hydroxyl of the adenosine moiety of NAD to yield NADP. This is NAD kinase from Shigella dysenteriae serotype 1 (strain Sd197).